The chain runs to 786 residues: DNA ligase (786 aa).

Residues 32–36, 81–82, and Glu-121 each bind NAD(+); these read DAEYD and SL. Lys-123 serves as the catalytic N6-AMP-lysine intermediate. Arg-144, Glu-181, Lys-297, and Lys-321 together coordinate NAD(+). Positions 415, 418, 445, and 451 each coordinate Zn(2+). The BRCT domain occupies 703-786; the sequence is AEGLPLAGQT…EQLKSYGIEA (84 aa).

It belongs to the NAD-dependent DNA ligase family. LigA subfamily. Mg(2+) serves as cofactor. The cofactor is Mn(2+).

The catalysed reaction is NAD(+) + (deoxyribonucleotide)n-3'-hydroxyl + 5'-phospho-(deoxyribonucleotide)m = (deoxyribonucleotide)n+m + AMP + beta-nicotinamide D-nucleotide.. Functionally, DNA ligase that catalyzes the formation of phosphodiester linkages between 5'-phosphoryl and 3'-hydroxyl groups in double-stranded DNA using NAD as a coenzyme and as the energy source for the reaction. It is essential for DNA replication and repair of damaged DNA. The sequence is that of DNA ligase from Ectopseudomonas mendocina (strain ymp) (Pseudomonas mendocina).